The primary structure comprises 861 residues: ToMV susceptible protein tm-2 (861 aa).

Positions 63-83 form a coiled coil; it reads VKNLLKDIQELAGDVEDLLDD. Positions 162–388 constitute an NB-ARC domain; it reads DDFNMLQAKL…LESMGHKVQD (227 aa). 185-192 lines the ATP pocket; the sequence is GMPGLGKT. LRR repeat units lie at residues 225–248, 305–327, 388–411, 449–472, 510–536, 585–608, 609–631, 652–680, 689–713, 735–758, 781–804, and 810–835; these read LDIAKQIGLTEQKIKENLEDNLRS, LHALQPLESEKSFELFTKKIFNF, DGCAKVLALSYNDLPIASRPCFLY, LAEDVLNDLVSRNLIQLAKRTYNG, VARLRRITFYSDNVMIEFFGSNPKLEK, MTCLRYLKLEGNICGKLPNSIVKL, TRLETIDIDRRSLIQLPSGVWES, ISSFYPNIYSLHPNNLQTLMWIPDKFFEP, LRKLGILGVSNSTVKILSTCRPVPK, YPKIVKLHLNVDRTIALNSEAFPP, LPKLRKLKMVICKYNEEKMALSGE, and FPQLEVLHIHSPNGLSEVTCTDDVSM.

This sequence belongs to the disease resistance NB-LRR family. (Microbial infection) Fails to interact with the tobamovirus mouvement protein of tobacco mosaic virus (TMV).

Its subcellular location is the cell membrane. In terms of biological role, potential inhibitor of viral mouvements which may confer resistance to some tobamoviruses but not to the tomato mosaic virus (ToMV) and tobacco mosaic virus (TMV). The protein is ToMV susceptible protein tm-2 of Solanum lycopersicum (Tomato).